The chain runs to 205 residues: UPF0637 protein OB1420 (205 aa).

Belongs to the UPF0637 family.

This Oceanobacillus iheyensis (strain DSM 14371 / CIP 107618 / JCM 11309 / KCTC 3954 / HTE831) protein is UPF0637 protein OB1420.